Here is a 455-residue protein sequence, read N- to C-terminus: Chitin deacetylase 2 (455 aa).

A signal peptide spans 1 to 19 (MIPSTAAALLTLTAGAAFA). 4 N-linked (GlcNAc...) asparagine glycosylation sites follow: Asn86, Asn98, Asn122, and Asn142. Positions 157 to 347 (MTWGLGFDDG…IKSAFNYIVP (191 aa)) constitute a NodB homology domain. Asp164 serves as the catalytic Proton acceptor. Position 164 (Asp164) interacts with acetate. A Co(2+)-binding site is contributed by Asp165. Asn168 carries an N-linked (GlcNAc...) asparagine glycan. Residues His214 and His218 each coordinate Co(2+). Tyr255 contributes to the acetate binding site. N-linked (GlcNAc...) asparagine glycosylation is found at Asn270 and Asn308. His321 (proton donor) is an active-site residue. N-linked (GlcNAc...) asparagine glycans are attached at residues Asn325, Asn353, Asn362, and Asn377. The interval 381–423 (STTQKDGSSSTNTASGSGAAGSASATSSSDDSSSSGGSSGSSG) is disordered. Asn426 carries an N-linked (GlcNAc...) asparagine glycan. The GPI-anchor amidated serine moiety is linked to residue Ser429. The propeptide at 430–455 (GALGMFDSLSGVGLILGGVVAGVMLL) is removed in mature form.

Belongs to the polysaccharide deacetylase family. Requires Co(2+) as cofactor. The GPI anchor is required for the attachment to the cell membrane but not for cell surface targeting.

The protein localises to the secreted. It localises to the cell wall. It is found in the cell membrane. The enzyme catalyses [(1-&gt;4)-N-acetyl-beta-D-glucosaminyl](n) + n H2O = chitosan + n acetate. In terms of biological role, hydrolyzes the N-acetamido groups of N-acetyl-D-glucosamine residues in chitin to form chitosan and acetate. Chitosan is required to anchor melanin to the cell wall, for maintenance of cell wall integrity, and for proper cytokinesis. Chitosan offers an advantage during infection as it is less readily detected than chitin by host immunosurveillance mechanisms. The sequence is that of Chitin deacetylase 2 from Cryptococcus neoformans var. grubii serotype A (strain H99 / ATCC 208821 / CBS 10515 / FGSC 9487) (Filobasidiella neoformans var. grubii).